A 332-amino-acid chain; its full sequence is Ferredoxin--NADP reductase 1 (332 aa).

FAD is bound by residues Asp-35, Lys-43, Phe-48, Val-88, Phe-123, Asp-284, and Thr-325.

It belongs to the ferredoxin--NADP reductase type 2 family. As to quaternary structure, homodimer. FAD serves as cofactor.

It carries out the reaction 2 reduced [2Fe-2S]-[ferredoxin] + NADP(+) + H(+) = 2 oxidized [2Fe-2S]-[ferredoxin] + NADPH. This Listeria innocua serovar 6a (strain ATCC BAA-680 / CLIP 11262) protein is Ferredoxin--NADP reductase 1.